The chain runs to 155 residues: Interleukin-2 (155 aa).

The first 20 residues, 1–20 (MYKMQLVACIALSLVLITNS), serve as a signal peptide directing secretion. O-linked (GalNAc...) threonine glycosylation is present at T23. A disulfide bridge links C77 with C125.

It belongs to the IL-2 family.

The protein resides in the secreted. Functionally, cytokine produced by activated CD4-positive helper T-cells and to a lesser extend activated CD8-positive T-cells and natural killer (NK) cells that plays pivotal roles in the immune response and tolerance. Binds to a receptor complex composed of either the high-affinity trimeric IL-2R (IL2RA/CD25, IL2RB/CD122 and IL2RG/CD132) or the low-affinity dimeric IL-2R (IL2RB and IL2RG). Interaction with the receptor leads to oligomerization and conformation changes in the IL-2R subunits resulting in downstream signaling starting with phosphorylation of JAK1 and JAK3. In turn, JAK1 and JAK3 phosphorylate the receptor to form a docking site leading to the phosphorylation of several substrates including STAT5. This process leads to activation of several pathways including STAT, phosphoinositide-3-kinase/PI3K and mitogen-activated protein kinase/MAPK pathways. Functions as a T-cell growth factor and can increase NK-cell cytolytic activity as well. Promotes strong proliferation of activated B-cells and subsequently immunoglobulin production. Plays a pivotal role in regulating the adaptive immune system by controlling the survival and proliferation of regulatory T-cells, which are required for the maintenance of immune tolerance. Moreover, participates in the differentiation and homeostasis of effector T-cell subsets, including Th1, Th2, Th17 as well as memory CD8-positive T-cells. The polypeptide is Interleukin-2 (IL2) (Dasypus novemcinctus (Nine-banded armadillo)).